Consider the following 147-residue polypeptide: Large ribosomal subunit protein uL15 (147 aa).

A disordered region spans residues 1–55 (MKLDNLAPQPGAKKRKRRVGRGIAAGQGASCGFGMRGQKSRSGRPTRPGFEGGQM). Gly residues predominate over residues 23–35 (IAAGQGASCGFGM).

It belongs to the universal ribosomal protein uL15 family. As to quaternary structure, part of the 50S ribosomal subunit.

Binds to the 23S rRNA. This is Large ribosomal subunit protein uL15 from Synechococcus elongatus (strain ATCC 33912 / PCC 7942 / FACHB-805) (Anacystis nidulans R2).